The sequence spans 1049 residues: Probable disease resistance protein RF9 (1049 aa).

Residues 25 to 41 (QGVEDQVTELKRDLNLL) are a coiled coil. Residues 139 to 158 (GYKQPQGDKQREMRPRFSKD) are disordered. Basic and acidic residues predominate over residues 144–158 (QGDKQREMRPRFSKD). The region spanning 147–460 (KQREMRPRFS…AEGIFQPRHY (314 aa)) is the NB-ARC domain. 190-197 (GMGGLGKT) serves as a coordination point for ATP. LRR repeat units follow at residues 584–608 (LELL…SIGQ), 609–634 (LIHL…NLKL), 657–682 (MQQL…NLVK), 683–707 (LETL…RLRT), 776–799 (PSHL…ILEK), 800–827 (LHQL…GFPQ), 849–873 (MPVL…HLPS), 896–923 (LVHL…GFPQ), 945–968 (MPQL…GFPQ), and 990–1015 (MPLL…RFIY).

The protein belongs to the disease resistance NB-LRR family.

Potential disease resistance protein. The protein is Probable disease resistance protein RF9 (RF9) of Arabidopsis thaliana (Mouse-ear cress).